We begin with the raw amino-acid sequence, 294 residues long: 4-hydroxy-tetrahydrodipicolinate synthase (294 aa).

Position 45 (Thr45) interacts with pyruvate. Tyr133 (proton donor/acceptor) is an active-site residue. The Schiff-base intermediate with substrate role is filled by Lys161. Ile203 contributes to the pyruvate binding site.

This sequence belongs to the DapA family. Homotetramer; dimer of dimers.

It localises to the cytoplasm. The enzyme catalyses L-aspartate 4-semialdehyde + pyruvate = (2S,4S)-4-hydroxy-2,3,4,5-tetrahydrodipicolinate + H2O + H(+). It functions in the pathway amino-acid biosynthesis; L-lysine biosynthesis via DAP pathway; (S)-tetrahydrodipicolinate from L-aspartate: step 3/4. Its function is as follows. Catalyzes the condensation of (S)-aspartate-beta-semialdehyde [(S)-ASA] and pyruvate to 4-hydroxy-tetrahydrodipicolinate (HTPA). This Shewanella sp. (strain MR-7) protein is 4-hydroxy-tetrahydrodipicolinate synthase.